Reading from the N-terminus, the 81-residue chain is Cortexin-2 (81 aa).

Residues 29–49 (TAFAFVGMLLVFLGLLIVRCF) form a helical membrane-spanning segment.

Belongs to the cortexin family.

The protein resides in the membrane. The polypeptide is Cortexin-2 (ctxn2) (Danio rerio (Zebrafish)).